The primary structure comprises 622 residues: DNA mismatch repair protein MutL (622 aa).

The protein belongs to the DNA mismatch repair MutL/HexB family.

Its function is as follows. This protein is involved in the repair of mismatches in DNA. It is required for dam-dependent methyl-directed DNA mismatch repair. May act as a 'molecular matchmaker', a protein that promotes the formation of a stable complex between two or more DNA-binding proteins in an ATP-dependent manner without itself being part of a final effector complex. The sequence is that of DNA mismatch repair protein MutL from Phenylobacterium zucineum (strain HLK1).